The following is a 127-amino-acid chain: Small ribosomal subunit protein uS12 (127 aa).

A 3-methylthioaspartic acid modification is found at Asp-89. Positions 102–127 are disordered; sequence LDTAGVKDRKQGRSKYGTKRPKEAKK. Residues 113-127 are compositionally biased toward basic residues; sequence GRSKYGTKRPKEAKK.

It belongs to the universal ribosomal protein uS12 family. Part of the 30S ribosomal subunit. Contacts proteins S8 and S17. May interact with IF1 in the 30S initiation complex.

Functionally, with S4 and S5 plays an important role in translational accuracy. In terms of biological role, interacts with and stabilizes bases of the 16S rRNA that are involved in tRNA selection in the A site and with the mRNA backbone. Located at the interface of the 30S and 50S subunits, it traverses the body of the 30S subunit contacting proteins on the other side and probably holding the rRNA structure together. The combined cluster of proteins S8, S12 and S17 appears to hold together the shoulder and platform of the 30S subunit. This is Small ribosomal subunit protein uS12 from Nostoc punctiforme (strain ATCC 29133 / PCC 73102).